We begin with the raw amino-acid sequence, 668 residues long: MKHYSIQPANLEFNAEGTPVSRDFDDVYFSNDNGLEETRYVFLGGNQLEARFPEYPHPLFVVAESGFGTGLNFLTLWQAFDQFREAHPQAQLQRLHFISFEKFPLTRSDLVLAHQHWPELAPWAEQLQAQWPMPLPGCHRLLLDEGRVTLDLWFGDINELTSQLDDSLNQKVDAWFLDGFAPAKNPDMWTQNLFNAMARLARPSGTLATFTSAGFVRRGLQDAGFTMQKRKGFGRKREMLCGVMEQTLPLPCSTPWFNRTGSSKREVAIIGGGIASALLSLALLRRSWQVTLYCADEAPALGASGNRQGALYPLLSKHDEALNRFFSNAFTFARRFYDQLPVKFDHDWCGVTQLGWDEKSQHKIAQMLSMDLPEELAVAVEANAVEQITGVATNCSGITYPQGGWLCPAELTRNVLELAQQQGLQIYYQYQLQDLSRKDDCWLLNFAEDQQATHSVVVLANGHQISRFSQTSSLPVYSVAGQVSHIPTTPELAKLKQVLCYDGYLTPQNPANQHHCIGASYHRGSEDTAYSDEDQQQNRQRLIDCFPQAQWAKEVDISEKEARCGVRCATRDHLPMVGNVPDYEATLVEYASLAEQKDKAVSAPVYDDLFMLDALGSRGLCSAPLCAEILAAQMSEEPIPMDASTLAALNPNRLWVRKLLKGKAVKAG.

The tract at residues 1–245 is tRNA (mnm(5)s(2)U34)-methyltransferase; sequence MKHYSIQPAN…KREMLCGVME (245 aa). An FAD-dependent cmnm(5)s(2)U34 oxidoreductase region spans residues 270 to 668; the sequence is IGGGIASALL…LLKGKAVKAG (399 aa).

In the N-terminal section; belongs to the methyltransferase superfamily. tRNA (mnm(5)s(2)U34)-methyltransferase family. This sequence in the C-terminal section; belongs to the DAO family. It depends on FAD as a cofactor.

It is found in the cytoplasm. The enzyme catalyses 5-aminomethyl-2-thiouridine(34) in tRNA + S-adenosyl-L-methionine = 5-methylaminomethyl-2-thiouridine(34) in tRNA + S-adenosyl-L-homocysteine + H(+). Catalyzes the last two steps in the biosynthesis of 5-methylaminomethyl-2-thiouridine (mnm(5)s(2)U) at the wobble position (U34) in tRNA. Catalyzes the FAD-dependent demodification of cmnm(5)s(2)U34 to nm(5)s(2)U34, followed by the transfer of a methyl group from S-adenosyl-L-methionine to nm(5)s(2)U34, to form mnm(5)s(2)U34. The chain is tRNA 5-methylaminomethyl-2-thiouridine biosynthesis bifunctional protein MnmC from Shigella dysenteriae serotype 1 (strain Sd197).